The sequence spans 178 residues: Crossover junction endodeoxyribonuclease RuvC (178 aa).

Catalysis depends on residues D11, E71, and D143. The Mg(2+) site is built by D11, E71, and D143.

The protein belongs to the RuvC family. As to quaternary structure, homodimer which binds Holliday junction (HJ) DNA. The HJ becomes 2-fold symmetrical on binding to RuvC with unstacked arms; it has a different conformation from HJ DNA in complex with RuvA. In the full resolvosome a probable DNA-RuvA(4)-RuvB(12)-RuvC(2) complex forms which resolves the HJ. Mg(2+) is required as a cofactor.

The protein localises to the cytoplasm. The catalysed reaction is Endonucleolytic cleavage at a junction such as a reciprocal single-stranded crossover between two homologous DNA duplexes (Holliday junction).. The RuvA-RuvB-RuvC complex processes Holliday junction (HJ) DNA during genetic recombination and DNA repair. Endonuclease that resolves HJ intermediates. Cleaves cruciform DNA by making single-stranded nicks across the HJ at symmetrical positions within the homologous arms, yielding a 5'-phosphate and a 3'-hydroxyl group; requires a central core of homology in the junction. The consensus cleavage sequence is 5'-(A/T)TT(C/G)-3'. Cleavage occurs on the 3'-side of the TT dinucleotide at the point of strand exchange. HJ branch migration catalyzed by RuvA-RuvB allows RuvC to scan DNA until it finds its consensus sequence, where it cleaves and resolves the cruciform DNA. This is Crossover junction endodeoxyribonuclease RuvC from Neisseria meningitidis serogroup B (strain ATCC BAA-335 / MC58).